The primary structure comprises 338 residues: Uroporphyrinogen decarboxylase (338 aa).

Residues 25–29 (RQAGR), phenylalanine 44, aspartate 75, tyrosine 146, serine 201, and histidine 314 each bind substrate.

It belongs to the uroporphyrinogen decarboxylase family. In terms of assembly, homodimer.

It is found in the cytoplasm. The enzyme catalyses uroporphyrinogen III + 4 H(+) = coproporphyrinogen III + 4 CO2. It participates in porphyrin-containing compound metabolism; protoporphyrin-IX biosynthesis; coproporphyrinogen-III from 5-aminolevulinate: step 4/4. Its function is as follows. Catalyzes the decarboxylation of four acetate groups of uroporphyrinogen-III to yield coproporphyrinogen-III. This chain is Uroporphyrinogen decarboxylase, found in Aquifex aeolicus (strain VF5).